Consider the following 127-residue polypeptide: Large ribosomal subunit protein bL19 (127 aa).

Belongs to the bacterial ribosomal protein bL19 family.

In terms of biological role, this protein is located at the 30S-50S ribosomal subunit interface and may play a role in the structure and function of the aminoacyl-tRNA binding site. This Bradyrhizobium sp. (strain BTAi1 / ATCC BAA-1182) protein is Large ribosomal subunit protein bL19.